Here is a 278-residue protein sequence, read N- to C-terminus: Large ribosomal subunit protein uL2 (278 aa).

The segment at 212–278 is disordered; that stretch reads NRHRGIRPQT…IISRKKHKKG (67 aa). Residues 257–278 show a composition bias toward basic residues; that stretch reads YKTRKKKASDKLIISRKKHKKG.

It belongs to the universal ribosomal protein uL2 family. As to quaternary structure, part of the 50S ribosomal subunit. Forms a bridge to the 30S subunit in the 70S ribosome.

Its function is as follows. One of the primary rRNA binding proteins. Required for association of the 30S and 50S subunits to form the 70S ribosome, for tRNA binding and peptide bond formation. It has been suggested to have peptidyltransferase activity; this is somewhat controversial. Makes several contacts with the 16S rRNA in the 70S ribosome. This chain is Large ribosomal subunit protein uL2, found in Helicobacter pylori (strain Shi470).